The primary structure comprises 101 residues: Apolipoprotein C-II (101 aa).

Residues 1-22 (MGTRFLLALFLVLLVLGFEVQG) form the signal peptide. The tract at residues 66–74 (TVDEKLRDM) is lipid binding. Positions 78-101 (STAAMSTYAGILTDQVLSMLKGEE) are lipoprotein lipase cofactor.

This sequence belongs to the apolipoprotein C2 family. Post-translationally, proapolipoprotein C-II is synthesized as a sialic acid containing glycoprotein which is subsequently desialylated prior to its proteolytic processing. Proapolipoprotein C-II, the major form found in plasma undergoes proteolytic cleavage of its N-terminal hexapeptide to generate apolipoprotein C-II, which occurs as the minor form in plasma.

Its subcellular location is the secreted. Its function is as follows. Component of chylomicrons, very low-density lipoproteins (VLDL), low-density lipoproteins (LDL), and high-density lipoproteins (HDL) in plasma. Plays an important role in lipoprotein metabolism as an activator of lipoprotein lipase. Both proapolipoprotein C-II and apolipoprotein C-II can activate lipoprotein lipase. The sequence is that of Apolipoprotein C-II (APOC2) from Plecturocebus moloch (Dusky titi monkey).